The chain runs to 145 residues: D-aminoacyl-tRNA deacylase (145 aa).

The Gly-cisPro motif, important for rejection of L-amino acids motif lies at 137 to 138 (GP).

The protein belongs to the DTD family. As to quaternary structure, homodimer.

The protein localises to the cytoplasm. It carries out the reaction glycyl-tRNA(Ala) + H2O = tRNA(Ala) + glycine + H(+). The enzyme catalyses a D-aminoacyl-tRNA + H2O = a tRNA + a D-alpha-amino acid + H(+). Functionally, an aminoacyl-tRNA editing enzyme that deacylates mischarged D-aminoacyl-tRNAs. Also deacylates mischarged glycyl-tRNA(Ala), protecting cells against glycine mischarging by AlaRS. Acts via tRNA-based rather than protein-based catalysis; rejects L-amino acids rather than detecting D-amino acids in the active site. By recycling D-aminoacyl-tRNA to D-amino acids and free tRNA molecules, this enzyme counteracts the toxicity associated with the formation of D-aminoacyl-tRNA entities in vivo and helps enforce protein L-homochirality. The polypeptide is D-aminoacyl-tRNA deacylase (Shewanella putrefaciens (strain CN-32 / ATCC BAA-453)).